Reading from the N-terminus, the 876-residue chain is Alanine--tRNA ligase (876 aa).

Zn(2+) is bound by residues His-568, His-572, Cys-670, and His-674.

It belongs to the class-II aminoacyl-tRNA synthetase family. Zn(2+) is required as a cofactor.

It localises to the cytoplasm. It catalyses the reaction tRNA(Ala) + L-alanine + ATP = L-alanyl-tRNA(Ala) + AMP + diphosphate. In terms of biological role, catalyzes the attachment of alanine to tRNA(Ala) in a two-step reaction: alanine is first activated by ATP to form Ala-AMP and then transferred to the acceptor end of tRNA(Ala). Also edits incorrectly charged Ser-tRNA(Ala) and Gly-tRNA(Ala) via its editing domain. The sequence is that of Alanine--tRNA ligase from Geotalea uraniireducens (strain Rf4) (Geobacter uraniireducens).